The sequence spans 198 residues: Small ribosomal subunit protein uS2 (198 aa).

This sequence belongs to the universal ribosomal protein uS2 family.

The protein is Small ribosomal subunit protein uS2 of Methanobrevibacter smithii (strain ATCC 35061 / DSM 861 / OCM 144 / PS).